The chain runs to 1175 residues: MAKPYEFNWQKEVPSFLQEGAVFDRYEEESFVFEPNCLFKVDEFGFFLTWKSEGKEGQVLECSLINSIRLAAIPKDPKILAALESVGKSENDLEGRILCVCSGTDLVNIGFTYMVAENPEITKQWVEGLRSIIHNFRANNVSPMTCLKKHWMKLAFLTNTSGKIPVRSITRTFASGKTEKVIFQALKELGLPSGKNDEIEPAAFTYEKFYELTQKICPRTDIEDLFKKINGDKTDYLTVDQLVSFLNEHQRDPRLNEILFPFYDAKRAMQIIEMYEPDEELKKKGLISSDGFCRYLMSDENAPVFLDRLELYQEMDHPLAHYFISSSHNTYLTGRQFGGKSSVEMYRQVLLAGCRCVELDCWDGKGEDQEPIITHGKAMCTDILFKDVIQAIKETAFVTSEYPVILSFENHCSKYQQYQMSKYCEDLFGDLLLKQALESHPLEPGRLLPSPNDLKRKILIKNKRLKPEVEKKQLEALKSMMEAGESAAPASILEDDNEEEIESADQEEEAHPEYKFGNELSADDFSHKEAVANSVKKGLVTVEDEQAWMASYKYVGATTNIHPYLSTMINYAQPVKFQGFHVAEERNIHYNMSSFNESVGLGYLKTHAIEFVNYNKRQMSRIYPKGGRVDSSNYMPQIFWNAGCQMVSLNYQTPDLAMQLNQGKFEYNGSCGYLLKPDFMRRPDRTFDPFSETPVDGVIAATCSVQVISGQFLSDKKIGTYVEVDMYGLPTDTIRKEFRTRMVMNNGLNPVYNEESFVFRKVILPDLAVLRIAVYDDNNKLIGQRILPLDGLQAGYRHISLRNEGNKPLSLPTIFCNIVLKTYVPDGFGDIVDALSDPKKFLSITEKRADQLRAMGIETSDIADVPSDTSKNDKKGKANPAKANVTPQSSSELRPTTTAALGSGQEAKKGIELIPQVRIEDLKQMKAYLKHLKKQQKELNSLKKKHAKEHSTMQKLHCTQVDKIVAQYDKEKSTHEKILEKAMKKKGGSNCLEIKKETEIKIQTLTSDHKSKVKEIVAQHTKEWSEMINTHSAEEQEIRDLHLSQQCELLRKLLINAHEQQTQQLKLSHDRESKEMRAHQAKISMENSKAISQDKSIKNKAERERRVRELNSSNTKKFLEERKRLAMKQSKEMDQLKKVQLEHLEFLEKQNEQAKEMQQMVKLEAEMDRRPATVV.

A2 carries the N-acetylalanine modification. Residues 313-463 (QEMDHPLAHY…LKRKILIKNK (151 aa)) form the PI-PLC X-box domain. Catalysis depends on residues H328 and H375. Residues 487-512 (AAPASILEDDNEEEIESADQEEEAHP) form a disordered region. Over residues 493-508 (LEDDNEEEIESADQEE) the composition is skewed to acidic residues. The region spanning 565-681 (LSTMINYAQP…GYLLKPDFMR (117 aa)) is the PI-PLC Y-box domain. Residues 684–809 (DRTFDPFSET…SLRNEGNKPL (126 aa)) enclose the C2 domain. Disordered stretches follow at residues 860 to 904 (SDIA…LGSG) and 1082 to 1110 (KISMENSKAISQDKSIKNKAERERRVREL). 2 stretches are compositionally biased toward polar residues: residues 885–900 (VTPQSSSELRPTTTAA) and 1085–1094 (MENSKAISQD). Phosphothreonine is present on T886. Basic and acidic residues predominate over residues 1095–1109 (KSIKNKAERERRVRE).

It depends on Ca(2+) as a cofactor. As to expression, preferentially expressed in the retina.

It is found in the cell membrane. The enzyme catalyses a 1,2-diacyl-sn-glycero-3-phospho-(1D-myo-inositol-4,5-bisphosphate) + H2O = 1D-myo-inositol 1,4,5-trisphosphate + a 1,2-diacyl-sn-glycerol + H(+). It carries out the reaction a 1,2-diacyl-sn-glycero-3-phospho-(1D-myo-inositol) + H2O = 1D-myo-inositol 1-phosphate + a 1,2-diacyl-sn-glycerol + H(+). Activated phosphatidylinositol-specific phospholipase C enzymes catalyze the production of the second messenger molecules diacylglycerol (DAG) and inositol 1,4,5-trisphosphate (IP3) involved in G-protein coupled receptor signaling pathways. PLCB4 is a direct effector of the endothelin receptor signaling pathway that plays an essential role in lower jaw and middle ear structures development. In Rattus norvegicus (Rat), this protein is 1-phosphatidylinositol 4,5-bisphosphate phosphodiesterase beta-4.